The following is a 485-amino-acid chain: Glutathione gamma-glutamylcysteinyltransferase 1 (485 aa).

The Peptidase C83 domain occupies 1-221 (MAMASLYRRS…GFMLISRPHR (221 aa)). Residues Cys56, His162, and Asp180 contribute to the active site.

Belongs to the phytochelatin synthase family. As to expression, expressed in roots and shoots.

It catalyses the reaction [Glu(-Cys)](n)-Gly + glutathione + H(+) = [Glu(-Cys)](n+1)-Gly + glycine. Its activity is regulated as follows. Requires cadmium for activity. Also activated in vitro or in heterologous system by Ag(+), Hg(+), Zn(2+), Cu(2+), Fe(2+) or Fe(3+) ions, but not by Co(2+) or Ni(2+) ions. Involved in the synthesis of phytochelatins (PC) and homophytochelatins (hPC), the heavy-metal-binding peptides of plants. Also involved in glutathione-conjugates degradation. This is Glutathione gamma-glutamylcysteinyltransferase 1 (PCS1) from Arabidopsis thaliana (Mouse-ear cress).